The following is a 316-amino-acid chain: HPr kinase/phosphorylase (316 aa).

Catalysis depends on residues H146 and K167. Residue 161–168 participates in ATP binding; the sequence is GESGLGKS. Residue S168 coordinates Mg(2+). The Proton acceptor; for phosphorylation activity. Proton donor; for dephosphorylation activity role is filled by D185. An important for the catalytic mechanism of both phosphorylation and dephosphorylation region spans residues 209 to 218; that stretch reads LEVRGIGLLD. E210 provides a ligand contact to Mg(2+). Residue R252 is part of the active site. The important for the catalytic mechanism of dephosphorylation stretch occupies residues 273-278; it reads QVEAGR.

Belongs to the HPrK/P family. In terms of assembly, homohexamer. The cofactor is Mg(2+).

It carries out the reaction [HPr protein]-L-serine + ATP = [HPr protein]-O-phospho-L-serine + ADP + H(+). It catalyses the reaction [HPr protein]-O-phospho-L-serine + phosphate + H(+) = [HPr protein]-L-serine + diphosphate. Its function is as follows. Catalyzes the ATP- as well as the pyrophosphate-dependent phosphorylation of a specific serine residue in HPr, a phosphocarrier protein of the phosphoenolpyruvate-dependent sugar phosphotransferase system (PTS). HprK/P also catalyzes the pyrophosphate-producing, inorganic phosphate-dependent dephosphorylation (phosphorolysis) of seryl-phosphorylated HPr (P-Ser-HPr). The sequence is that of HPr kinase/phosphorylase from Polaromonas sp. (strain JS666 / ATCC BAA-500).